Consider the following 316-residue polypeptide: Actinorhodin polyketide synthase bifunctional cyclase/dehydratase (316 aa).

It functions in the pathway antibiotic biosynthesis; actinorhodin biosynthesis. In terms of biological role, is needed for correct cyclization of the oligoketide leading to isochromanequinone formation. The protein is Actinorhodin polyketide synthase bifunctional cyclase/dehydratase of Streptomyces coelicolor (strain ATCC BAA-471 / A3(2) / M145).